Here is a 216-residue protein sequence, read N- to C-terminus: Adenylate kinase (216 aa).

10 to 15 (GAGKGT) provides a ligand contact to ATP. An NMP region spans residues 30–59 (STGDMLRAAVKAGTPLGLELKKVMDAGQLV). Residues T31, R36, 57–59 (QLV), 85–88 (GFPR), and Q92 each bind AMP. The tract at residues 122–159 (GRRVHLASGRTYHIQYNPPKVEGKDDVTGEDLIQRDDD) is LID. ATP is bound by residues R123 and 132 to 133 (TY). Residues R156 and R167 each coordinate AMP. G202 contributes to the ATP binding site.

This sequence belongs to the adenylate kinase family. Monomer.

It is found in the cytoplasm. It carries out the reaction AMP + ATP = 2 ADP. It functions in the pathway purine metabolism; AMP biosynthesis via salvage pathway; AMP from ADP: step 1/1. Catalyzes the reversible transfer of the terminal phosphate group between ATP and AMP. Plays an important role in cellular energy homeostasis and in adenine nucleotide metabolism. This chain is Adenylate kinase, found in Pseudomonas putida (strain GB-1).